The sequence spans 1094 residues: RecBCD enzyme subunit RecB (1094 aa).

The region spanning 1–326 is the UvrD-like helicase ATP-binding domain; that stretch reads MDRFELLGPL…YTLGVNWRSD (326 aa). Residues 1-713 are DNA-binding and helicase activity, interacts with RecC; that stretch reads MDRFELLGPL…LLRGRRPGQS (713 aa). Position 21 to 28 (21 to 28) interacts with ATP; that stretch reads ASAGTGKT. The UvrD-like helicase C-terminal domain occupies 357-613; sequence AGHRLASAPR…QIMTVFVAKG (257 aa). Residues 775–1094 form a nuclease activity, interacts with RecD and RecA region; sequence TWRRTSYSDL…DLLDRGRLQS (320 aa). 3 residues coordinate Mg(2+): His838, Asp975, and Asp989. The For nuclease activity role is filled by Asp989.

This sequence belongs to the helicase family. UvrD subfamily. Heterotrimer of RecB, RecC and RecD. All subunits contribute to DNA-binding. Interacts with RecA. It depends on Mg(2+) as a cofactor.

It catalyses the reaction Exonucleolytic cleavage (in the presence of ATP) in either 5'- to 3'- or 3'- to 5'-direction to yield 5'-phosphooligonucleotides.. The enzyme catalyses Couples ATP hydrolysis with the unwinding of duplex DNA by translocating in the 3'-5' direction.. The catalysed reaction is ATP + H2O = ADP + phosphate + H(+). A helicase/nuclease that prepares dsDNA breaks (DSB) for recombinational DNA repair. Binds to DSBs and unwinds DNA via a highly rapid and processive ATP-dependent bidirectional helicase activity. In the holoenzyme this subunit contributes ATPase, 3'-5' helicase, exonuclease activity and loads RecA onto ssDNA. Unlike the case in E.coli, suppresses RecA-dependent homologous recombination, is instead required for single-strand annealing pathway repair of DSB. The chain is RecBCD enzyme subunit RecB from Mycobacterium tuberculosis (strain CDC 1551 / Oshkosh).